Consider the following 207-residue polypeptide: Probable flagellin 2 (207 aa).

Positions 1–14 (MRVGSRKLRRDEKG) are excised as a propeptide.

The protein belongs to the archaeal flagellin family.

It is found in the archaeal flagellum. In terms of biological role, flagellin is the subunit protein which polymerizes to form the filaments of archaeal flagella. The chain is Probable flagellin 2 (flaB2) from Archaeoglobus fulgidus (strain ATCC 49558 / DSM 4304 / JCM 9628 / NBRC 100126 / VC-16).